The chain runs to 154 residues: Aspartate carbamoyltransferase regulatory chain (154 aa).

Residues cysteine 110, cysteine 115, cysteine 136, and cysteine 139 each contribute to the Zn(2+) site.

Belongs to the PyrI family. In terms of assembly, contains catalytic and regulatory chains. It depends on Zn(2+) as a cofactor.

In terms of biological role, involved in allosteric regulation of aspartate carbamoyltransferase. This chain is Aspartate carbamoyltransferase regulatory chain, found in Halobacterium salinarum (strain ATCC 700922 / JCM 11081 / NRC-1) (Halobacterium halobium).